Consider the following 379-residue polypeptide: MTSLHLKKFRRIVVKVGSSLLIDSDAGEVRAAWLSALADDIAGLHGEGRDVLIVSSGSIALGRSKLKLPRGPLKLEESQAAAAVGQIALARIWSKVLGDHGIGAGQILVTLQDTEERRRYLNARSTIAKLLDWRAVPVINENDTVATNEIRYGDNDRLAARVATMASADLLILLSDIDGLYDAPPHLNPDAKLIPVVKRVTADIEAMAGSAASELSRGGMQTKIEAAKIATTAGTHMLIASGKIEHPLRAVMDGGRCTWFMTPANPVTARKRWIAGSLEPKGTLTIDAGAVAALRAGKSLLPAGVIRVDGQFARGDAVIVRGPNTHEIGRGLVAYDAVDAEKIKGRSSCDAAQILGISGRAEMIHRDDLVVGGPRGGAG.

K15 provides a ligand contact to ATP. S56, D143, and N155 together coordinate substrate. An ATP-binding site is contributed by 175-176 (SD). Positions 281–358 (KGTLTIDAGA…CDAAQILGIS (78 aa)) constitute a PUA domain.

Belongs to the glutamate 5-kinase family.

Its subcellular location is the cytoplasm. The enzyme catalyses L-glutamate + ATP = L-glutamyl 5-phosphate + ADP. It participates in amino-acid biosynthesis; L-proline biosynthesis; L-glutamate 5-semialdehyde from L-glutamate: step 1/2. Catalyzes the transfer of a phosphate group to glutamate to form L-glutamate 5-phosphate. The polypeptide is Glutamate 5-kinase (Nitrobacter hamburgensis (strain DSM 10229 / NCIMB 13809 / X14)).